A 256-amino-acid polypeptide reads, in one-letter code: UPF0644 protein PB2B4.06 (256 aa).

A helical membrane pass occupies residues 34–56; sequence GVVYAGVSGTCAAAGYMFGNFVM.

This sequence belongs to the UPF0644 family.

Its subcellular location is the mitochondrion membrane. In Schizosaccharomyces pombe (strain 972 / ATCC 24843) (Fission yeast), this protein is UPF0644 protein PB2B4.06.